Consider the following 618-residue polypeptide: Arginine--tRNA ligase (618 aa).

Residues 113 to 123 carry the 'HIGH' region motif; it reads ANPIHPLHIGH.

The protein belongs to the class-I aminoacyl-tRNA synthetase family.

Its subcellular location is the cytoplasm. It carries out the reaction tRNA(Arg) + L-arginine + ATP = L-arginyl-tRNA(Arg) + AMP + diphosphate. The polypeptide is Arginine--tRNA ligase (Sulfolobus acidocaldarius (strain ATCC 33909 / DSM 639 / JCM 8929 / NBRC 15157 / NCIMB 11770)).